The following is a 70-amino-acid chain: Small ribosomal subunit protein bS21C (70 aa).

It belongs to the bacterial ribosomal protein bS21 family.

This chain is Small ribosomal subunit protein bS21C, found in Burkholderia pseudomallei (strain 1710b).